The following is a 264-amino-acid chain: Inner membrane ABC transporter permease protein YdcV (264 aa).

Residues 1–12 (MHSERAPFFLKL) lie on the Cytoplasmic side of the membrane. A helical transmembrane segment spans residues 13–33 (AAWGGVVFLHFPILIIAAYAF). At 34-70 (NTEDAAFSFPPQGLTLRWFSVAAQRSDILDAVTLSLK) the chain is on the periplasmic side. In terms of domain architecture, ABC transmembrane type-1 spans 65 to 252 (VTLSLKVAAL…MLVTTLPILG (188 aa)). Residues 71-91 (VAALATLIALVLGTLAAAALW) traverse the membrane as a helical segment. Topologically, residues 92–100 (RRDFFGKNA) are cytoplasmic. Residues 101-121 (ISLLLLLPIALPGIVTGLALL) traverse the membrane as a helical segment. At 122–128 (TAFKTIN) the chain is on the periplasmic side. A helical membrane pass occupies residues 129-149 (LEPGFFTIVVGHATFCVVVVF). At 150–189 (NNVIARFRRTSWSLVEASMDLGANGWQTFRYVVLPNLSSA) the chain is on the cytoplasmic side. Residues 190–210 (LLAGGMLAFALSFDEIIVTTF) form a helical membrane-spanning segment. Topologically, residues 211–236 (TAGHERTLPLWLLNQLGRPRDVPVTN) are periplasmic. The chain crosses the membrane as a helical span at residues 237-257 (VVALLVMLVTTLPILGAWWLT). Residues 258–264 (REGDNGQ) are Cytoplasmic-facing.

It belongs to the binding-protein-dependent transport system permease family. CysTW subfamily.

The protein localises to the cell inner membrane. In terms of biological role, probably part of the ABC transporter complex YdcSTUV. Probably responsible for the translocation of the substrate across the membrane. This is Inner membrane ABC transporter permease protein YdcV (ydcV) from Shigella flexneri.